Here is a 155-residue protein sequence, read N- to C-terminus: Peptidyl-prolyl cis-trans isomerase ppi1 (155 aa).

The PPIase cyclophilin-type domain maps to 1–154 (MANVELQTSL…EPLKIIKAVA (154 aa)).

It belongs to the cyclophilin-type PPIase family. PPIL1 subfamily. In terms of assembly, interacts with cwf13/snw1.

The catalysed reaction is [protein]-peptidylproline (omega=180) = [protein]-peptidylproline (omega=0). Functionally, PPIases accelerate the folding of proteins. It catalyzes the cis-trans isomerization of proline imidic peptide bonds in oligopeptides. This is Peptidyl-prolyl cis-trans isomerase ppi1 (ppi1) from Schizosaccharomyces pombe (strain 972 / ATCC 24843) (Fission yeast).